We begin with the raw amino-acid sequence, 1031 residues long: Receptor-like protein EIX1 (1031 aa).

Residues 1–29 (MDKWKYARLAQFLFTLSLLFLETSFGLGG) form the signal peptide. Asparagine 30 is a glycosylation site (N-linked (GlcNAc...) asparagine). Positions 30-113 (NKTLCLDKER…PRLTGKLSPS (84 aa)) are N-cap. The Extracellular segment spans residues 30–971 (NKTLCLDKER…DEEEEFPSLE (942 aa)). One copy of the LRR 1 repeat lies at 117–140 (LEYLNYLDLSVNEFERSEIPRFIG). One copy of the LRR 2; degenerate repeat lies at 142-165 (LKRLEYLNLSASFFSGVIPIQFQN). Asparagine 149 and asparagine 165 each carry an N-linked (GlcNAc...) asparagine glycan. LRR repeat units lie at residues 166–189 (LTSL…WLSH), 191–215 (SSLE…ITKV), 216–240 (PSLK…DLAN), and 243–266 (LISL…SWVF). N-linked (GlcNAc...) asparagine glycosylation is present at asparagine 240. An N-linked (GlcNAc...) asparagine glycan is attached at asparagine 267. LRR repeat units follow at residues 269–292 (TTSL…RFGT), 293–317 (LMYL…SFGN), 318–341 (LTRL…LFLR), 346–369 (RKSL…ATRF), 370–393 (SSLK…AGQV), 394–416 (STLE…LALF), 417–440 (PSLR…IGKL), 441–463 (SQLR…MGQL), 465–487 (NLES…HLSN), 488–509 (LSSL…SFNW), 512–536 (PFQL…LQNQ), 538–559 (NYTV…WFSS), 561–584 (PPDL…LIEN), and 586–611 (YGYR…NVQI). A glycan (N-linked (GlcNAc...) asparagine) is linked at asparagine 317. N-linked (GlcNAc...) asparagine glycans are attached at residues asparagine 365 and asparagine 383. An N-linked (GlcNAc...) asparagine glycan is attached at asparagine 487. N-linked (GlcNAc...) asparagine glycans are attached at residues asparagine 538, asparagine 568, and asparagine 597. Residues 612–629 (FYLHKNQFFGSISSICRS) form an LRR 21; degenerate repeat. 6 LRR repeats span residues 630-654 (RTSP…WMNM), 655-678 (TSLA…LGSL), 679-703 (TNLK…QCQG), 705-725 (QILD…IGTD), 726-750 (LLNL…ICQL), and 752-773 (FLQI…CFNN). N-linked (GlcNAc...) asparagine glycosylation is found at asparagine 653 and asparagine 666. 2 N-linked (GlcNAc...) asparagine glycosylation sites follow: asparagine 773 and asparagine 781. LRR repeat units lie at residues 823–847 (LLYL…IADM), 848–871 (RGLK…IGQM), 872–895 (RMLE…LANL), and 896–918 (TFLS…STQL). N-linked (GlcNAc...) asparagine glycosylation is found at asparagine 854, asparagine 861, and asparagine 894. The interval 919–971 (QSFDRSSYSDNAQLCGPPLQECPGYAPPSPLIDHGSNNNPQEHDEEEEFPSLE) is C-cap/acidic domain. The chain crosses the membrane as a helical span at residues 972–992 (FYISMVLSFFVAFWGILGCLI). At 993–1031 (VNSSWRNAYFKFLTDTTSWLDMISRVWFARLKKKLRRAR) the chain is on the cytoplasmic side.

The protein belongs to the RLP family. In terms of assembly, interacts with EIX elicitor protein.

It is found in the cell membrane. Functionally, involved in plant defense. Confers resistance to the fungal pathogen T.viride through recognition of the EIX elicitor protein. The sequence is that of Receptor-like protein EIX1 from Solanum lycopersicum (Tomato).